A 105-amino-acid polypeptide reads, in one-letter code: Integration host factor subunit alpha (105 aa).

This sequence belongs to the bacterial histone-like protein family. As to quaternary structure, heterodimer of an alpha and a beta chain.

Functionally, this protein is one of the two subunits of integration host factor, a specific DNA-binding protein that functions in genetic recombination as well as in transcriptional and translational control. The polypeptide is Integration host factor subunit alpha (Rhodospirillum rubrum (strain ATCC 11170 / ATH 1.1.1 / DSM 467 / LMG 4362 / NCIMB 8255 / S1)).